We begin with the raw amino-acid sequence, 398 residues long: Serpin-Z1C (398 aa).

The interval glycine 343–phenylalanine 367 is RCL.

This sequence belongs to the serpin family.

Its function is as follows. Inhibits chymotrypsin and cathepsin G in vitro. This is Serpin-Z1C from Triticum aestivum (Wheat).